The primary structure comprises 525 residues: MVKEELSEFEKQRLANIAERDALLKKLSLDAQSTGVFTSNMPRGTSANQSKPKKKPAPKVKKEESLLPRRTSSRLRGIAADSEIAKRKADEEYDRRQEEERAKRVRKSDSFSFNDIFVSGQKLSGDALIGVDVVTKGVAVPYQRTFGEEDIKSTDDKDLKALRKEMNSLSLWEAWEPNRIKITPERIYSMTFHPSEAKPVIFAGDKMGHLGILDASQEKPTSAVKNEDDEDDEDDDDPDPVLVTLKPHTRTISSMTVHPSKPTHLYTASYDSSIRELDLEKTSSVEKYAPESTSDDVPISGLDMAAGDPNTIYWTTLDGAFGRYDMRTKRQSSATTWQLSEKKIGGFSLYQTHPHYVATASLDRTMRLWDIRNLSHTDPTPVGEHQSRLSVSHAAFNCVGQIATSSYDDTLKLYDFSSKGISSWKPGHILDESEMKPDTIVRHNCQTGRWVTILRPQWQLNPQSAIQRFCIGNMNRFVDIYSGSGDQLAQLGGDGITAVPAVAVFHRSKNWVAGGTASGKICLWM.

The span at 34-50 (TGVFTSNMPRGTSANQS) shows a compositional bias: polar residues. 3 disordered regions span residues 34 to 103 (TGVF…ERAK), 214 to 240 (DASQEKPTSAVKNEDDEDDEDDDDPDP), and 282 to 301 (TSSVEKYAPESTSDDVPISG). Basic and acidic residues predominate over residues 83–102 (EIAKRKADEEYDRRQEEERA). A WD 1 repeat occupies 182–223 (ITPERIYSMTFHPSEAKPVIFAGDKMGHLGILDASQEKPTSA). Over residues 227 to 239 (EDDEDDEDDDDPD) the composition is skewed to acidic residues. WD repeat units follow at residues 247–287 (PHTR…SVEK), 339–379 (LSEK…HTDP), 384–425 (EHQS…SSWK), 448–491 (GRWV…LAQL), and 494–525 (DGITAVPAVAVFHRSKNWVAGGTASGKICLWM).

The protein belongs to the WD repeat DDB2/WDR76 family.

DNA-binding protein that binds to both single- and double-stranded DNA. Binds preferentially to UV-damaged DNA. May be involved in DNA-metabolic processes. The polypeptide is DNA damage-binding protein cmr1 (Emericella nidulans (strain FGSC A4 / ATCC 38163 / CBS 112.46 / NRRL 194 / M139) (Aspergillus nidulans)).